Here is a 628-residue protein sequence, read N- to C-terminus: Biosynthetic arginine decarboxylase (628 aa).

Lysine 99 bears the N6-(pyridoxal phosphate)lysine mark. 279–289 lines the substrate pocket; the sequence is VDVGGGLGIDY.

Belongs to the Orn/Lys/Arg decarboxylase class-II family. SpeA subfamily. Mg(2+) is required as a cofactor. Pyridoxal 5'-phosphate serves as cofactor.

It catalyses the reaction L-arginine + H(+) = agmatine + CO2. Its pathway is amine and polyamine biosynthesis; agmatine biosynthesis; agmatine from L-arginine: step 1/1. Its function is as follows. Catalyzes the biosynthesis of agmatine from arginine. The polypeptide is Biosynthetic arginine decarboxylase (Xylella fastidiosa (strain M12)).